The following is a 469-amino-acid chain: Aspartyl/glutamyl-tRNA(Asn/Gln) amidotransferase subunit B (469 aa).

Belongs to the GatB/GatE family. GatB subfamily. Heterotrimer of A, B and C subunits.

The enzyme catalyses L-glutamyl-tRNA(Gln) + L-glutamine + ATP + H2O = L-glutaminyl-tRNA(Gln) + L-glutamate + ADP + phosphate + H(+). The catalysed reaction is L-aspartyl-tRNA(Asn) + L-glutamine + ATP + H2O = L-asparaginyl-tRNA(Asn) + L-glutamate + ADP + phosphate + 2 H(+). Allows the formation of correctly charged Asn-tRNA(Asn) or Gln-tRNA(Gln) through the transamidation of misacylated Asp-tRNA(Asn) or Glu-tRNA(Gln) in organisms which lack either or both of asparaginyl-tRNA or glutaminyl-tRNA synthetases. The reaction takes place in the presence of glutamine and ATP through an activated phospho-Asp-tRNA(Asn) or phospho-Glu-tRNA(Gln). This Thermus thermophilus (strain ATCC 27634 / DSM 579 / HB8) protein is Aspartyl/glutamyl-tRNA(Asn/Gln) amidotransferase subunit B.